Here is a 106-residue protein sequence, read N- to C-terminus: UPF0145 protein VCM66_A0911 (106 aa).

Belongs to the UPF0145 family.

This is UPF0145 protein VCM66_A0911 from Vibrio cholerae serotype O1 (strain M66-2).